A 147-amino-acid chain; its full sequence is D-aminoacyl-tRNA deacylase (147 aa).

A Gly-cisPro motif, important for rejection of L-amino acids motif is present at residues 136 to 137; the sequence is GP.

It belongs to the DTD family. In terms of assembly, homodimer.

It localises to the cytoplasm. The enzyme catalyses glycyl-tRNA(Ala) + H2O = tRNA(Ala) + glycine + H(+). It carries out the reaction a D-aminoacyl-tRNA + H2O = a tRNA + a D-alpha-amino acid + H(+). Its function is as follows. An aminoacyl-tRNA editing enzyme that deacylates mischarged D-aminoacyl-tRNAs. Also deacylates mischarged glycyl-tRNA(Ala), protecting cells against glycine mischarging by AlaRS. Acts via tRNA-based rather than protein-based catalysis; rejects L-amino acids rather than detecting D-amino acids in the active site. By recycling D-aminoacyl-tRNA to D-amino acids and free tRNA molecules, this enzyme counteracts the toxicity associated with the formation of D-aminoacyl-tRNA entities in vivo and helps enforce protein L-homochirality. The polypeptide is D-aminoacyl-tRNA deacylase (Streptococcus equi subsp. zooepidemicus (strain MGCS10565)).